The primary structure comprises 450 residues: MKRRYFGTDGIRGQSNIFPMTPDLAMRVGIAVGTIFRNGAHRHRVVIGKDTRLSGYMLENAMVAGFTAAGLDVFLLGPIPTPGVAMLTRSLRADIGVMISASHNAFRDNGIKLFGPDGYKLSDDIEQKIEDLLEQDMSGQLAKPEDIGRAKRVDGDIYRYIEQAKRTLPRDVTLKGLRIAIDCANGAAYKVAPSALWELGAEVVTIGTEPNGVNINLECGSTHPAALQKKVHEVRADIGIALDGDADRVLIVDEEGAVIDGDQLMAVIADSWAADGMLKGGGIAATVMSNLGLERYLQARRLKLHRTKVGDRYVVEQMRQDGLNVGGEQSGHIVLSDFGTTGDGLVAALQILAVVKRQGKTVSEICRRFEPVPQVLKNVRVSAGKPLEDAAVQQAIAEAEAQLAKNGRLLIRPSGTEPLIRVMAEGDDRGQVERIVDELVNVIGGVRNAA.

The Phosphoserine intermediate role is filled by serine 102. The Mg(2+) site is built by serine 102, aspartate 243, aspartate 245, and aspartate 247. At serine 102 the chain carries Phosphoserine.

It belongs to the phosphohexose mutase family. Mg(2+) is required as a cofactor. Post-translationally, activated by phosphorylation.

It catalyses the reaction alpha-D-glucosamine 1-phosphate = D-glucosamine 6-phosphate. Functionally, catalyzes the conversion of glucosamine-6-phosphate to glucosamine-1-phosphate. The chain is Phosphoglucosamine mutase from Rhizobium meliloti (strain 1021) (Ensifer meliloti).